The sequence spans 1153 residues: Protein unc-13 homolog 4B (1153 aa).

Residues 54-84 form a disordered region; that stretch reads VLKSSLAPLEENGSGGEEDSDESPDGTLQLS. The C2 1 domain maps to 162 to 288; it reads ATHEEIYEAA…MKEIAVTASS (127 aa). Residues D195, D201, D252, F253, and D254 each contribute to the Ca(2+) site. Residues 637–755 form the MHD1 domain; that stretch reads FEVYLILKRY…RCCIFYAQQM (119 aa). The region spanning 869-975 is the MHD2 domain; it reads SNSMDQLMMY…LETSDLIHQY (107 aa). A C2 2 domain is found at 990–1114; it reads PYGQLTITAQ…EATPPGEQIM (125 aa). Ca(2+) is bound by residues D1019, D1025, D1083, and D1085.

Belongs to the unc-13 family. As to quaternary structure, interacts with Cam. It depends on Ca(2+) as a cofactor.

The protein resides in the cytoplasm. Its subcellular location is the cytoskeleton. It is found in the cell projection. It localises to the filopodium. The protein localises to the late endosome. The protein resides in the lysosome. In terms of biological role, essential for tracheal development in embryos. Functions with the GTPase Rab39 and downstream of dnd, to regulate lumen fusion between previously separate tracheal branches (anastomosis). Essential component of secretory lysosome-related organelles (SLs) that are present in the tracheal fusion tip cells (FCs). Mediates intracellular fusion of the extending tracheal stalk cell lumen in the FCs by recruiting the SNARE complex component Syx1A to the SLs, this may then enable the SLs to interact with complementary SNAREs (such as Syb) present in the apical membrane of the FC-FC interface and the membranes of the separate tracheal stalk cells. May also function in the maturation and exocytosis of the SLs. The chain is Protein unc-13 homolog 4B from Drosophila melanogaster (Fruit fly).